A 99-amino-acid polypeptide reads, in one-letter code: DNA-directed RNA polymerase subunit omega (99 aa).

It belongs to the RNA polymerase subunit omega family. The RNAP catalytic core consists of 2 alpha, 1 beta, 1 beta' and 1 omega subunit. When a sigma factor is associated with the core the holoenzyme is formed, which can initiate transcription.

It carries out the reaction RNA(n) + a ribonucleoside 5'-triphosphate = RNA(n+1) + diphosphate. Promotes RNA polymerase assembly. Latches the N- and C-terminal regions of the beta' subunit thereby facilitating its interaction with the beta and alpha subunits. The polypeptide is DNA-directed RNA polymerase subunit omega (Xanthomonas oryzae pv. oryzae (strain MAFF 311018)).